Consider the following 146-residue polypeptide: uncharacterized protein (146 aa).

This is an uncharacterized protein from Acanthamoeba polyphaga mimivirus (APMV).